Reading from the N-terminus, the 486-residue chain is Hydrogenobyrinate a,c-diamide synthase (486 aa).

Pro residues predominate over residues 254-272 (SPPPPLPVPSPGAAPPDPL). The tract at residues 254 to 284 (SPPPPLPVPSPGAAPPDPLVRPGRPRPQAPD) is disordered. Residues 289-474 (RVAMASGAAF…LHTHWAAEPG (186 aa)) enclose the GATase cobBQ-type domain. The Nucleophile role is filled by Cys-372.

This sequence belongs to the CobB/CbiA family. Mg(2+) serves as cofactor.

It carries out the reaction hydrogenobyrinate + 2 L-glutamine + 2 ATP + 2 H2O = hydrogenobyrinate a,c-diamide + 2 L-glutamate + 2 ADP + 2 phosphate + 2 H(+). The protein operates within cofactor biosynthesis; adenosylcobalamin biosynthesis; cob(II)yrinate a,c-diamide from precorrin-2 (aerobic route): step 9/10. Catalyzes the ATP-dependent amidation of the two carboxylate groups at positions a and c of hydrogenobyrinate, using either L-glutamine or ammonia as the nitrogen source. The sequence is that of Hydrogenobyrinate a,c-diamide synthase from Streptomyces coelicolor (strain ATCC BAA-471 / A3(2) / M145).